Here is a 252-residue protein sequence, read N- to C-terminus: Imidazole glycerol phosphate synthase subunit HisF (252 aa).

Active-site residues include D11 and D130.

Belongs to the HisA/HisF family. In terms of assembly, heterodimer of HisH and HisF.

Its subcellular location is the cytoplasm. The catalysed reaction is 5-[(5-phospho-1-deoxy-D-ribulos-1-ylimino)methylamino]-1-(5-phospho-beta-D-ribosyl)imidazole-4-carboxamide + L-glutamine = D-erythro-1-(imidazol-4-yl)glycerol 3-phosphate + 5-amino-1-(5-phospho-beta-D-ribosyl)imidazole-4-carboxamide + L-glutamate + H(+). It functions in the pathway amino-acid biosynthesis; L-histidine biosynthesis; L-histidine from 5-phospho-alpha-D-ribose 1-diphosphate: step 5/9. IGPS catalyzes the conversion of PRFAR and glutamine to IGP, AICAR and glutamate. The HisF subunit catalyzes the cyclization activity that produces IGP and AICAR from PRFAR using the ammonia provided by the HisH subunit. The chain is Imidazole glycerol phosphate synthase subunit HisF from Anoxybacillus flavithermus (strain DSM 21510 / WK1).